The following is a 252-amino-acid chain: uncharacterized protein (252 aa).

The N-terminal stretch at 1-25 (MRKKKFLSRFAFGSLFLLCGTILSA) is a signal peptide. A lipid anchor (N-palmitoyl cysteine) is attached at Cys-26. A lipid anchor (S-diacylglycerol cysteine) is attached at Cys-26.

Belongs to the MG439/MG440 family.

It is found in the cell membrane. This is an uncharacterized protein from Mycoplasma pneumoniae (strain ATCC 29342 / M129 / Subtype 1) (Mycoplasmoides pneumoniae).